The primary structure comprises 189 residues: Potassium-transporting ATPase KdpC subunit (189 aa).

The helical transmembrane segment at 6-26 (PAILMLIIFTILCGGIYPAVV) threads the bilayer.

This sequence belongs to the KdpC family. The system is composed of three essential subunits: KdpA, KdpB and KdpC.

Its subcellular location is the cell inner membrane. Its function is as follows. Part of the high-affinity ATP-driven potassium transport (or Kdp) system, which catalyzes the hydrolysis of ATP coupled with the electrogenic transport of potassium into the cytoplasm. This subunit acts as a catalytic chaperone that increases the ATP-binding affinity of the ATP-hydrolyzing subunit KdpB by the formation of a transient KdpB/KdpC/ATP ternary complex. This chain is Potassium-transporting ATPase KdpC subunit, found in Geobacter sulfurreducens (strain ATCC 51573 / DSM 12127 / PCA).